Here is a 348-residue protein sequence, read N- to C-terminus: Phenylalanine--tRNA ligase alpha subunit (348 aa).

A Mg(2+)-binding site is contributed by glutamate 259.

Belongs to the class-II aminoacyl-tRNA synthetase family. Phe-tRNA synthetase alpha subunit type 1 subfamily. In terms of assembly, tetramer of two alpha and two beta subunits. Requires Mg(2+) as cofactor.

Its subcellular location is the cytoplasm. The catalysed reaction is tRNA(Phe) + L-phenylalanine + ATP = L-phenylalanyl-tRNA(Phe) + AMP + diphosphate + H(+). The protein is Phenylalanine--tRNA ligase alpha subunit of Lactiplantibacillus plantarum (strain ATCC BAA-793 / NCIMB 8826 / WCFS1) (Lactobacillus plantarum).